The chain runs to 242 residues: DNA repair protein RecO (242 aa).

This sequence belongs to the RecO family.

Involved in DNA repair and RecF pathway recombination. The sequence is that of DNA repair protein RecO from Dechloromonas aromatica (strain RCB).